The chain runs to 267 residues: Phosphate import ATP-binding protein PstB 2 (267 aa).

The ABC transporter domain maps to 21–262; sequence LATKDLHVYY…AQCQSTNDYV (242 aa). 53–60 is a binding site for ATP; the sequence is GPSGCGKS.

This sequence belongs to the ABC transporter superfamily. Phosphate importer (TC 3.A.1.7) family. In terms of assembly, the complex is composed of two ATP-binding proteins (PstB), two transmembrane proteins (PstC and PstA) and a solute-binding protein (PstS).

The protein localises to the cell membrane. The enzyme catalyses phosphate(out) + ATP + H2O = ADP + 2 phosphate(in) + H(+). Part of the ABC transporter complex PstSACB involved in phosphate import. Responsible for energy coupling to the transport system. In Streptococcus pyogenes serotype M1, this protein is Phosphate import ATP-binding protein PstB 2.